The following is a 331-amino-acid chain: Small ribosomal subunit protein uS2 (331 aa).

This sequence belongs to the universal ribosomal protein uS2 family.

The polypeptide is Small ribosomal subunit protein uS2 (Rhodopseudomonas palustris (strain BisB5)).